The sequence spans 431 residues: Mitochondrial distribution and morphology protein 12 (431 aa).

The SMP-LTD domain occupies 1-431 (MSIDLNWETL…VYPSFWTFLV (431 aa)). Disordered regions lie at residues 68 to 153 (DFYE…GVST) and 209 to 289 (QSHT…PKPE). The segment covering 69-96 (FYEDLDDDDGGSDEDDEGSNSCQTDEEN) has biased composition (acidic residues). Residues 97–113 (EAAKTLRERRKMDRVER) are compositionally biased toward basic and acidic residues. A compositionally biased stretch (polar residues) spans 115–129 (ANGSSNVSNPPSYTD). Positions 241-252 (SASTLAVSSSTT) are enriched in low complexity.

This sequence belongs to the MDM12 family. As to quaternary structure, component of the ER-mitochondria encounter structure (ERMES) or MDM complex, composed of mmm1, mdm10, mdm12 and mdm34. A mmm1 homodimer associates with one molecule of mdm12 on each side in a pairwise head-to-tail manner, and the SMP-LTD domains of mmm1 and mdm12 generate a continuous hydrophobic tunnel for phospholipid trafficking.

Its subcellular location is the mitochondrion outer membrane. The protein resides in the endoplasmic reticulum membrane. Functionally, component of the ERMES/MDM complex, which serves as a molecular tether to connect the endoplasmic reticulum (ER) and mitochondria. Components of this complex are involved in the control of mitochondrial shape and protein biogenesis, and function in nonvesicular lipid trafficking between the ER and mitochondria. Mdm12 is required for the interaction of the ER-resident membrane protein mmm1 and the outer mitochondrial membrane-resident beta-barrel protein mdm10. The mdm12-mmm1 subcomplex functions in the major beta-barrel assembly pathway that is responsible for biogenesis of all mitochondrial outer membrane beta-barrel proteins, and acts in a late step after the SAM complex. The mdm10-mdm12-mmm1 subcomplex further acts in the TOM40-specific pathway after the action of the mdm12-mmm1 complex. Essential for establishing and maintaining the structure of mitochondria and maintenance of mtDNA nucleoids. This Sclerotinia sclerotiorum (strain ATCC 18683 / 1980 / Ss-1) (White mold) protein is Mitochondrial distribution and morphology protein 12.